A 380-amino-acid polypeptide reads, in one-letter code: Cytochrome b (380 aa).

Transmembrane regions (helical) follow at residues 34 to 54, 78 to 99, 114 to 134, and 179 to 199; these read FGSL…LLAM, WLIR…YFHI, WNTG…GYVL, and FFAL…IHLT. H84 and H98 together coordinate heme b. Heme b contacts are provided by H183 and H197. H202 lines the a ubiquinone pocket. The next 4 helical transmembrane spans lie at 227–247, 289–309, 321–341, and 348–368; these read LKDI…ALFS, LGGV…PFLH, LSQL…WVGS, and FIII…VLFP.

The protein belongs to the cytochrome b family. The cytochrome bc1 complex contains 11 subunits: 3 respiratory subunits (MT-CYB, CYC1 and UQCRFS1), 2 core proteins (UQCRC1 and UQCRC2) and 6 low-molecular weight proteins (UQCRH/QCR6, UQCRB/QCR7, UQCRQ/QCR8, UQCR10/QCR9, UQCR11/QCR10 and a cleavage product of UQCRFS1). This cytochrome bc1 complex then forms a dimer. Heme b is required as a cofactor.

It localises to the mitochondrion inner membrane. In terms of biological role, component of the ubiquinol-cytochrome c reductase complex (complex III or cytochrome b-c1 complex) that is part of the mitochondrial respiratory chain. The b-c1 complex mediates electron transfer from ubiquinol to cytochrome c. Contributes to the generation of a proton gradient across the mitochondrial membrane that is then used for ATP synthesis. This Halobaena caerulea (Blue petrel) protein is Cytochrome b (MT-CYB).